The chain runs to 155 residues: Acetylaranotin biosynthesis cluster protein L (155 aa).

Its pathway is mycotoxin biosynthesis. In terms of biological role, nonribosomal peptide synthetase; part of the gene cluster that mediates the biosynthesis of acetylaranotin, a member of the epipolythiodioxopiperazine (ETP) class of toxins characterized by a disulfide-bridged cyclic dipeptide. The first step of acetylaranotin biosynthesis is performed by the NRPS ataP which produces diketopiperazine cyclo-L-Phe-L-Phe via the condensation of 2 phenylalanines (L-Phe). The ataC domain of ataTC then catalyzes the formation of bishydroxylation of cyclo-L-Phe-L-Phe. The glutathione S-transferase domain ataG in ataIMG further catalyzes the conjugation of two glutathiones to the bishydroxylated intermediate. Next, the dipeptidase ataJ removes the Glu residues. The following step is performed by the carbon sulfur lyase domain ataI of ataIMG which may convert the bis-cysteinyl adduct to yield an epidithiol intermediate. The ataT domain from ataTC then catalyzes the oxidation of the free dithiols, followed by a cyclization step catalyzed by the cytochrome P450 ataF. AtaF probably acts as an epoxidase to promote a dual epoxidation formation at C8 and C9 along with C8' and C9', followed by the spontaneous nucleophilic attack of the amide nitrogens N10 and N10' to yield an intermediate with the pyrrolidine partial structure. The final steps of acetylaranotin biosynthesis involve the acetylation and ring rearrangement of an epitetrathiodiketopiperazine intermediate to produce acetylaranotin. AtaH probably catalyzes the acetylation of epitetrathiodiketopiperazine to produce a diacetate and ataY is responsible for the formation of the dihydrooxepin moiety that converts the diacetate intermediate to acetylaranotin via acetylapoaranotin. Both enzymes could function independently in the absence of the other. The specific function of ataL within the pathway has still to be determined. The acetylaranotin bis-thiomethyltransferase ataS located outside of acetylaranotin gene cluster is the main thiomethyltransferase responsible for converting acetylaranotin and its related intermediates to their methylated forms. The chain is Acetylaranotin biosynthesis cluster protein L from Aspergillus terreus (strain NIH 2624 / FGSC A1156).